The sequence spans 425 residues: MLDFDLVLFGATGDLAMRKLFVSLYEIYIHYGFKNDSRIIASGRKELSNEEFLALLCEKTQLHSREKGEEFLTHISYLRVRLDNPKDFEELSKIATNNKPLIFYFSISPSFFATTAQNLAQNALNHANTRLILEKPLGHDLKTCKEIFQSISAFFKEEQIFRIDHYLGKKGVQNILELRLNNPILNILWDQISAVEICVYETLGVEERGEFYDKIGALRDMVQNHLLQVLSLIATDLPNDLKDLRQEKIKVLKTLQPPKDFTKQVIRAQYQGYRDENKVHKESQTETFVAIKAFLDTPKFKGVPFYLKHAKKMPRNQASVKIHFNAVNTLEFFLSQDKITLTLKDHQNPLILETHNKQEFLQPYAKLLYDAIPNNHYNFAHQLELEASWVFIDTLIEGFINNATPLYSYESHNLNESEFLKPLYQ.

The NADP(+) site is built by Arg44 and Lys135. Substrate is bound by residues His165, Lys169, Glu201, and Asp220. Residue His225 is the Proton acceptor of the active site. Residue Lys311 participates in substrate binding.

The protein belongs to the glucose-6-phosphate dehydrogenase family.

The catalysed reaction is D-glucose 6-phosphate + NADP(+) = 6-phospho-D-glucono-1,5-lactone + NADPH + H(+). It functions in the pathway carbohydrate degradation; pentose phosphate pathway; D-ribulose 5-phosphate from D-glucose 6-phosphate (oxidative stage): step 1/3. Catalyzes the oxidation of glucose 6-phosphate to 6-phosphogluconolactone. The polypeptide is Glucose-6-phosphate 1-dehydrogenase (Helicobacter pylori (strain J99 / ATCC 700824) (Campylobacter pylori J99)).